Here is an 806-residue protein sequence, read N- to C-terminus: Ent-atiserene synthase KSL4, chloroplastic (806 aa).

Residues 1–75 (MGIVALILIK…AKLFKKNEVC (75 aa)) constitute a chloroplast transit peptide. The interval 33-56 (ASLAGSGLPKTTPPKTASLQSHSP) is disordered. Positions 45 to 55 (PPKTASLQSHS) are enriched in polar residues. Mg(2+)-binding residues include D556, D560, N700, and E708. The DDXXD motif motif lies at 556–560 (DDLFD).

This sequence belongs to the terpene synthase family. Mg(2+) serves as cofactor. As to expression, highly expressed in leaves, and, at low levels, in roots, stems and flowers.

The protein localises to the plastid. It localises to the chloroplast. It carries out the reaction ent-copalyl diphosphate = ent-atiserene + diphosphate. The protein operates within secondary metabolite biosynthesis; terpenoid biosynthesis. Its function is as follows. Involved in the biosynthesis of ent-kaurene diterpenoids natural products such as oridonin, miltiradiene, eriocalyxin B and nezukol, known to exhibit antitumor, anti-inflammatory and antibacterial activities. Catalyzes the conversion of ent-copalyl diphosphate (ent-CPP) to ent-atiserene. In Isodon rubescens (Rabdosia rubescens), this protein is Ent-atiserene synthase KSL4, chloroplastic.